The following is a 404-amino-acid chain: Formate-dependent phosphoribosylglycinamide formyltransferase (404 aa).

N(1)-(5-phospho-beta-D-ribosyl)glycinamide contacts are provided by residues 25–26 (EL) and glutamate 85. Residues arginine 118, lysine 159, 164–169 (SSGKGQ), 199–202 (EGFI), and glutamate 207 contribute to the ATP site. The ATP-grasp domain occupies 123-318 (RLAAEELGLP…EFELHARAIL (196 aa)). Residues glutamate 277 and glutamate 289 each contribute to the Mg(2+) site. Residues aspartate 296, lysine 365, and 372–373 (RR) contribute to the N(1)-(5-phospho-beta-D-ribosyl)glycinamide site. Positions 384–404 (TDEARSRAKQAAAAVRPVSAK) are disordered. The span at 392 to 404 (KQAAAAVRPVSAK) shows a compositional bias: low complexity.

Belongs to the PurK/PurT family. Homodimer.

It catalyses the reaction N(1)-(5-phospho-beta-D-ribosyl)glycinamide + formate + ATP = N(2)-formyl-N(1)-(5-phospho-beta-D-ribosyl)glycinamide + ADP + phosphate + H(+). Its pathway is purine metabolism; IMP biosynthesis via de novo pathway; N(2)-formyl-N(1)-(5-phospho-D-ribosyl)glycinamide from N(1)-(5-phospho-D-ribosyl)glycinamide (formate route): step 1/1. In terms of biological role, involved in the de novo purine biosynthesis. Catalyzes the transfer of formate to 5-phospho-ribosyl-glycinamide (GAR), producing 5-phospho-ribosyl-N-formylglycinamide (FGAR). Formate is provided by PurU via hydrolysis of 10-formyl-tetrahydrofolate. The chain is Formate-dependent phosphoribosylglycinamide formyltransferase from Paraburkholderia xenovorans (strain LB400).